Here is a 100-residue protein sequence, read N- to C-terminus: Small ribosomal subunit protein uS14c (100 aa).

It belongs to the universal ribosomal protein uS14 family. As to quaternary structure, part of the 30S ribosomal subunit.

It is found in the plastid. The protein resides in the chloroplast. Functionally, binds 16S rRNA, required for the assembly of 30S particles. The protein is Small ribosomal subunit protein uS14c of Pelargonium hortorum (Common geranium).